The primary structure comprises 380 residues: Capsular polysaccharide biosynthesis glycosyltransferase CapM (380 aa).

It belongs to the glycosyltransferase group 1 family. Glycosyltransferase 4 subfamily.

The protein operates within capsule biogenesis; capsule polysaccharide biosynthesis. Its function is as follows. Required for the biosynthesis of type 1 capsular polysaccharide. The protein is Capsular polysaccharide biosynthesis glycosyltransferase CapM (capM) of Staphylococcus aureus.